Reading from the N-terminus, the 667-residue chain is Holliday junction recognition protein (667 aa).

Positions 78 to 126 (LNGQAPEGDSESSGADTSLEENWPSCSSAMREASGDPRQRQPAVPGNTL) are disordered. Phosphoserine is present on residues serine 169, serine 185, and serine 195. Disordered stretches follow at residues 181–201 (ISAK…GQGP) and 279–317 (RRRP…EPGK). The segment covering 279-297 (RRRPSRKQGLHKNRTHCPR) has biased composition (basic residues). 4 positions are modified to phosphoserine: serine 388, serine 424, serine 449, and serine 462. Residues 443 to 530 (YRSGSKSPGS…NSEPTGKAVW (88 aa)) are disordered. Basic and acidic residues predominate over residues 466-482 (GREKTERPGEALEDLRG). Residues 496 to 515 (SCPSPEGSPSRSPSHSQLSS) are compositionally biased toward low complexity. Lysine 554 is covalently cross-linked (Glycyl lysine isopeptide (Lys-Gly) (interchain with G-Cter in SUMO2)). Serine 567 bears the Phosphoserine mark. A disordered region spans residues 596–617 (KRLNPDSPQQSSQKRSISPGCH). Polar residues predominate over residues 601–611 (DSPQQSSQKRS). Serine 613 is subject to Phosphoserine.

Interacts with CENPA (via CATD domain); the interaction is direct and specific for CENPA since it does not interact with H3.1- or H3.3-containing nucleosomes. Heterotrimer composed of HJURP, CENPA and histone H4, where HJURP interacts with the dimer formed by CENPA and histone H4 and prevents tetramerization of CENPA and H4. Identified in a centromere complex containing histones H2A, H2B and H4, and at least CENPA, CENPB, CENPC, CENPT, CENPN, HJURP, SUPT16H, SSRP1 and RSF1. Interacts with 14-3-3 family members in a phosphorylation-dependent manner. Interacts with MSH5 and NBN.

The protein localises to the nucleus. It localises to the nucleolus. The protein resides in the chromosome. It is found in the centromere. Its function is as follows. Centromeric protein that plays a central role in the incorporation and maintenance of histone H3-like variant CENPA at centromeres. Acts as a specific chaperone for CENPA and is required for the incorporation of newly synthesized CENPA molecules into nucleosomes at replicated centromeres. Prevents CENPA-H4 tetramerization and prevents premature DNA binding by the CENPA-H4 tetramer. Directly binds Holliday junctions. In Mus musculus (Mouse), this protein is Holliday junction recognition protein (Hjurp).